The chain runs to 273 residues: Dermonecrotic toxin LhSicTox-alphaIA1i (273 aa).

H5 is an active-site residue. 2 residues coordinate Mg(2+): E25 and D27. H41 (nucleophile) is an active-site residue. 2 cysteine pairs are disulfide-bonded: C45–C51 and C47–C190. D85 contacts Mg(2+).

It belongs to the arthropod phospholipase D family. Class II subfamily. Requires Mg(2+) as cofactor. Expressed by the venom gland.

It is found in the secreted. It carries out the reaction an N-(acyl)-sphingosylphosphocholine = an N-(acyl)-sphingosyl-1,3-cyclic phosphate + choline. It catalyses the reaction an N-(acyl)-sphingosylphosphoethanolamine = an N-(acyl)-sphingosyl-1,3-cyclic phosphate + ethanolamine. The enzyme catalyses a 1-acyl-sn-glycero-3-phosphocholine = a 1-acyl-sn-glycero-2,3-cyclic phosphate + choline. The catalysed reaction is a 1-acyl-sn-glycero-3-phosphoethanolamine = a 1-acyl-sn-glycero-2,3-cyclic phosphate + ethanolamine. Its function is as follows. Dermonecrotic toxins cleave the phosphodiester linkage between the phosphate and headgroup of certain phospholipids (sphingolipid and lysolipid substrates), forming an alcohol (often choline) and a cyclic phosphate. This toxin acts on sphingomyelin (SM). It may also act on ceramide phosphoethanolamine (CPE), lysophosphatidylcholine (LPC) and lysophosphatidylethanolamine (LPE), but not on lysophosphatidylserine (LPS), and lysophosphatidylglycerol (LPG). It acts by transphosphatidylation, releasing exclusively cyclic phosphate products as second products. Induces dermonecrosis, hemolysis, increased vascular permeability, edema, inflammatory response, and platelet aggregation. In Loxosceles hirsuta (Recluse spider), this protein is Dermonecrotic toxin LhSicTox-alphaIA1i.